Consider the following 510-residue polypeptide: MKKELVFIIDFGGQYSQLIARRVRENNVYCEIIPYSTSIEKIKEKNPKGIIFSGGPNSVYGENSPRISKEIFEIDVPVLGICYGQQLASFILGGKVESAKVREYGKTAVNLDNKCALFEGIDKVQECWMSHTDYVSEIPSGFNIVAYTDGCKVAAMANEDKKIYGVQFHPEVEHTPFGKKMLKNFLFNICELKGDWSVTSFAEEKIKEIRELVGDKKVICALSGGVDSSVAAVIVHKAIGDQLTCIFVDHGLLRKDEGDQVESIFKEKFQMNLIRVNAQDRFLGKLKGVTEPERKRKIIGEEFIRVFEEEANKLGKIDYLVQGTIYPDVVESGTDTSATIKSHHNVGGLPEDIEFELIEPLRELFKDEVRRVGEELGIPHKLVWRQPFPGPGLGIRVLGEVTEEKLEIVREADAIFREEIANAGLDEKIWQYFACLPNIRSVGVMGDERTYSHTIGLRAVNSSDGMTSDWAKIPYEVLDKVSIRIVNEVKGVNRIVYDITSKPPSTIEWE.

The region spanning 5 to 195 (LVFIIDFGGQ…LFNICELKGD (191 aa)) is the Glutamine amidotransferase type-1 domain. The active-site Nucleophile is Cys82. Active-site residues include His169 and Glu171. The GMPS ATP-PPase domain occupies 196 to 385 (WSVTSFAEEK…LGIPHKLVWR (190 aa)). 223-229 (SGGVDSS) is a binding site for ATP.

In terms of assembly, homodimer.

It carries out the reaction XMP + L-glutamine + ATP + H2O = GMP + L-glutamate + AMP + diphosphate + 2 H(+). The protein operates within purine metabolism; GMP biosynthesis; GMP from XMP (L-Gln route): step 1/1. Its function is as follows. Catalyzes the synthesis of GMP from XMP. The sequence is that of GMP synthase [glutamine-hydrolyzing] from Clostridium tetani (strain Massachusetts / E88).